Consider the following 329-residue polypeptide: N-acetyl-gamma-glutamyl-phosphate reductase (329 aa).

The active site involves C155.

It belongs to the NAGSA dehydrogenase family. Type 1 subfamily.

The protein resides in the cytoplasm. The catalysed reaction is N-acetyl-L-glutamate 5-semialdehyde + phosphate + NADP(+) = N-acetyl-L-glutamyl 5-phosphate + NADPH + H(+). It participates in amino-acid biosynthesis; L-arginine biosynthesis; N(2)-acetyl-L-ornithine from L-glutamate: step 3/4. Its function is as follows. Catalyzes the NADPH-dependent reduction of N-acetyl-5-glutamyl phosphate to yield N-acetyl-L-glutamate 5-semialdehyde. The protein is N-acetyl-gamma-glutamyl-phosphate reductase of Shewanella pealeana (strain ATCC 700345 / ANG-SQ1).